Consider the following 91-residue polypeptide: Acylphosphatase (91 aa).

Positions cysteine 3–tyrosine 91 constitute an Acylphosphatase-like domain. Residues arginine 18 and asparagine 36 contribute to the active site.

Belongs to the acylphosphatase family.

It catalyses the reaction an acyl phosphate + H2O = a carboxylate + phosphate + H(+). This chain is Acylphosphatase (acyP), found in Dehalococcoides mccartyi (strain ATCC BAA-2266 / KCTC 15142 / 195) (Dehalococcoides ethenogenes (strain 195)).